Here is a 93-residue protein sequence, read N- to C-terminus: Large ribosomal subunit protein eL42 (93 aa).

4 residues coordinate Zn(2+): Cys11, Cys14, Cys72, and Cys75. The segment at 11-75 (CPHCHSHFEH…TDLKYRCSEC (65 aa)) adopts a C4-type zinc-finger fold.

The protein belongs to the eukaryotic ribosomal protein eL42 family. As to quaternary structure, part of the 50S ribosomal subunit. Requires Zn(2+) as cofactor.

In terms of biological role, binds to the 23S rRNA. In Natronomonas pharaonis (strain ATCC 35678 / DSM 2160 / CIP 103997 / JCM 8858 / NBRC 14720 / NCIMB 2260 / Gabara) (Halobacterium pharaonis), this protein is Large ribosomal subunit protein eL42 (rpl44e).